We begin with the raw amino-acid sequence, 307 residues long: Aspartate carbamoyltransferase catalytic subunit (307 aa).

Carbamoyl phosphate contacts are provided by Arg-54 and Thr-55. Residue Lys-83 participates in L-aspartate binding. Carbamoyl phosphate is bound by residues Arg-104, His-132, and Gln-135. Arg-165 and Arg-228 together coordinate L-aspartate. Leu-267 and Pro-268 together coordinate carbamoyl phosphate.

This sequence belongs to the aspartate/ornithine carbamoyltransferase superfamily. ATCase family. Heterododecamer (2C3:3R2) of six catalytic PyrB chains organized as two trimers (C3), and six regulatory PyrI chains organized as three dimers (R2).

It catalyses the reaction carbamoyl phosphate + L-aspartate = N-carbamoyl-L-aspartate + phosphate + H(+). It functions in the pathway pyrimidine metabolism; UMP biosynthesis via de novo pathway; (S)-dihydroorotate from bicarbonate: step 2/3. Catalyzes the condensation of carbamoyl phosphate and aspartate to form carbamoyl aspartate and inorganic phosphate, the committed step in the de novo pyrimidine nucleotide biosynthesis pathway. The polypeptide is Aspartate carbamoyltransferase catalytic subunit (Clostridium perfringens (strain 13 / Type A)).